Consider the following 23-residue polypeptide: Phallacidin proprotein 1 (23 aa).

Residue proline 1 is a propeptide. Positions 2–8 form a cross-link, cyclopeptide (Ala-Pro); the sequence is AWLVDCP. The segment at residues 3–7 is a cross-link (2'-cysteinyl-6'-hydroxytryptophan sulfoxide (Trp-Cys)); sequence WLVDC. A propeptide spanning residues 9–23 is cleaved from the precursor; sequence CVGDDINRLLTRGEK.

This sequence belongs to the MSDIN fungal toxin family. Processed by the macrocyclase-peptidase enzyme POPB to yield a toxic cyclic heptapeptide. POPB first removes 10 residues from the N-terminus. Conformational trapping of the remaining peptide forces the enzyme to release this intermediate rather than proceed to macrocyclization. The enzyme rebinds the remaining peptide in a different conformation and catalyzes macrocyclization of the N-terminal 7 residues.

Major toxin that belongs to the bicyclic heptapeptides called phallotoxins. Although structurally related to amatoxins, phallotoxins have a different mode of action, which is the stabilization of F-actin. Phallotoxins are poisonous when administered parenterally, but not orally because of poor absorption. The sequence is that of Phallacidin proprotein 1 from Amanita phalloides (Death cap).